Consider the following 461-residue polypeptide: Cytochrome c biogenesis protein CcsB (461 aa).

3 helical membrane passes run 32–52 (LRLA…GTVI), 91–111 (TWWF…CTFT), and 178–198 (IGPI…IWGA).

It belongs to the Ccs1/CcsB family. As to quaternary structure, may interact with CcsA.

The protein localises to the cellular thylakoid membrane. In terms of biological role, required during biogenesis of c-type cytochromes (cytochrome c6 and cytochrome f) at the step of heme attachment. This Trichormus variabilis (strain ATCC 29413 / PCC 7937) (Anabaena variabilis) protein is Cytochrome c biogenesis protein CcsB.